Here is a 638-residue protein sequence, read N- to C-terminus: MMGIQILPPQLANQIAAGEVVERPASVVKELVENSLDAGASRVDIEIDKGGSKLIKIRDNGSGIPKDELALALSRHATSKLHTLDDLEAILSFGFRGEALASISSVSRLTLTSRTADQTEAWQAHAEGADMAVKVMPAAHPVGSTIEVVDLFFNTPARRRFLKSDKTEFTHIDEWLKRIALVRGDIHLTLTHNGKTVRNYRPAMNEAQYLQRLTQVSGRPFAEQALKIECQHDDLRLSGYLQSPWSPVISDTHYFYVNGRLIRDRLVNHAVRQAFAQKAELEQPGYVLMLDIDPHQVDVNVHPAKHEVRFHQSRYVHDYILQALQSALEEAGELNFVHSSSLDEVEDVFVDAPTSATEISAPFVLGADSAQVNVPADTLESAQPLVASAVQVKSAGAGREGASFGTQTNAFGSMATPRDNSRGNYSAGESRQRTELPSKAAIASYGALLQTPSYSVKDQDYQPSLPMPAILDGQYWVMATADKLSLLPIKSVALATRCQEIEAKLATGLIGQPLLMPVSVAADADWQAVLDEHDTLIRQLGLELTIRYQQLIIKKVPPYIRESQLAKVIPEWLQSLRFETPAPSALAFWLAKHSLTGFVSAPEIWAAFSQLAEEKKQLIANKAILLPWQSWLEEQASE.

The segment at 404–433 is disordered; sequence FGTQTNAFGSMATPRDNSRGNYSAGESRQR.

Belongs to the DNA mismatch repair MutL/HexB family.

Its function is as follows. This protein is involved in the repair of mismatches in DNA. It is required for dam-dependent methyl-directed DNA mismatch repair. May act as a 'molecular matchmaker', a protein that promotes the formation of a stable complex between two or more DNA-binding proteins in an ATP-dependent manner without itself being part of a final effector complex. This is DNA mismatch repair protein MutL from Shewanella baltica (strain OS195).